The chain runs to 306 residues: Putative type I specificity subunit S.MpnORF285P (306 aa).

This sequence belongs to the type-I restriction system S methylase family. As to quaternary structure, the methyltransferase is composed of M and S polypeptides.

The specificity (S) subunit of a type I methyltransferase (MTase); this subunit dictates DNA sequence specificity. The single R subunit has multiple frameshifts and is probably not expressed. This Mycoplasma pneumoniae (strain ATCC 29342 / M129 / Subtype 1) (Mycoplasmoides pneumoniae) protein is Putative type I specificity subunit S.MpnORF285P.